An 833-amino-acid polypeptide reads, in one-letter code: Leucine--tRNA ligase (833 aa).

The 'HIGH' region motif lies at 41–52; the sequence is PYPSGAGLHVGH. The 'KMSKS' region motif lies at 610–614; it reads KMSKS. K613 provides a ligand contact to ATP.

It belongs to the class-I aminoacyl-tRNA synthetase family.

The protein localises to the cytoplasm. It catalyses the reaction tRNA(Leu) + L-leucine + ATP = L-leucyl-tRNA(Leu) + AMP + diphosphate. This Streptococcus pneumoniae (strain Hungary19A-6) protein is Leucine--tRNA ligase.